The following is a 525-amino-acid chain: Lysine--tRNA ligase (525 aa).

The Mg(2+) site is built by E430 and E437.

Belongs to the class-II aminoacyl-tRNA synthetase family. In terms of assembly, homodimer. It depends on Mg(2+) as a cofactor.

Its subcellular location is the cytoplasm. The enzyme catalyses tRNA(Lys) + L-lysine + ATP = L-lysyl-tRNA(Lys) + AMP + diphosphate. In Chlamydia caviae (strain ATCC VR-813 / DSM 19441 / 03DC25 / GPIC) (Chlamydophila caviae), this protein is Lysine--tRNA ligase.